The following is a 341-amino-acid chain: Serine/threonine-protein kinase PDIK1L (341 aa).

In terms of domain architecture, Protein kinase spans Tyr8–Phe334. Residues Val14–Val22 and Lys37 each bind ATP. Asp164 serves as the catalytic Proton acceptor.

Belongs to the protein kinase superfamily. Ser/Thr protein kinase family. In terms of tissue distribution, expressed in liver, kidney, pancreas, spleen, thymus and prostate.

It localises to the nucleus. It carries out the reaction L-seryl-[protein] + ATP = O-phospho-L-seryl-[protein] + ADP + H(+). The enzyme catalyses L-threonyl-[protein] + ATP = O-phospho-L-threonyl-[protein] + ADP + H(+). The sequence is that of Serine/threonine-protein kinase PDIK1L (PDIK1L) from Homo sapiens (Human).